The sequence spans 622 residues: 4-hydroxyphenylalkanoate adenylyltransferase (622 aa).

This sequence belongs to the ATP-dependent AMP-binding enzyme family.

The catalysed reaction is 17-(4-hydroxyphenyl)heptadecanoate + holo-[(phenol)carboxyphthiodiolenone synthase] + ATP = 17-(4-hydroxyphenyl)heptadecanoyl-[(phenol)carboxyphthiodiolenone synthase] + AMP + diphosphate. It carries out the reaction 19-(4-hydroxyphenyl)nonadecanoate + holo-[(phenol)carboxyphthiodiolenone synthase] + ATP = 19-(4-hydroxyphenyl)nonadecanoyl-[(phenol)carboxyphthiodiolenone synthase] + AMP + diphosphate. It participates in lipid metabolism; fatty acid biosynthesis. Its function is as follows. Catalyzes the activation of long-chain fatty acids as acyl-adenylates (acyl-AMP), which are then transferred to the multifunctional polyketide synthase PpsA for further chain extension. Involved in the biosynthesis of phenolphthiocerol, which is an important intermediate in the biosynthesis of phenolic glycolipid (PGL), also called mycosid B. The protein is 4-hydroxyphenylalkanoate adenylyltransferase (fadD29) of Mycobacterium marinum (strain ATCC BAA-535 / M).